A 325-amino-acid polypeptide reads, in one-letter code: Putative [LysW]-lysine/[LysW]-ornithine hydrolase (325 aa).

Position 66 (His66) interacts with Zn(2+). Residue Asp68 is part of the active site. Asp90 contacts Zn(2+). Glu117 functions as the Proton acceptor in the catalytic mechanism. 3 residues coordinate Zn(2+): Glu118, Glu139, and His297.

This sequence belongs to the peptidase M20A family. LysK subfamily. Zn(2+) serves as cofactor. Co(2+) is required as a cofactor.

The protein resides in the cytoplasm. The catalysed reaction is [amino-group carrier protein]-C-terminal-gamma-(L-lysyl)-L-glutamate + H2O = [amino-group carrier protein]-C-terminal-L-glutamate + L-lysine. It carries out the reaction [amino-group carrier protein]-C-terminal-gamma-(L-ornithyl)-L-glutamate + H2O = [amino-group carrier protein]-C-terminal-L-glutamate + L-ornithine. The protein operates within amino-acid biosynthesis; L-lysine biosynthesis via AAA pathway; L-lysine from L-alpha-aminoadipate (Thermus route): step 5/5. It participates in amino-acid biosynthesis; L-arginine biosynthesis. Catalyzes the release of L-lysine from [LysW]-gamma-L-lysine and the release of L-ornithine from [LysW]-L-ornithine. In Pyrococcus horikoshii (strain ATCC 700860 / DSM 12428 / JCM 9974 / NBRC 100139 / OT-3), this protein is Putative [LysW]-lysine/[LysW]-ornithine hydrolase.